Consider the following 608-residue polypeptide: MPPETATNPKDARHDGWQTLKRFLPYLWPADNAVLRRRVVGAILMVLLGKATTLALPFAYKKAVDAMTLGGGAQPALTVALAFVLAYALGRFSGVLFDNLRNIVFERVGQDATRHLAENVFARLHKLSLRFHLARRTGEVTKVIERGTKSIDTMLYFLLFNIAPTVIELTAVIVIFWLNFGLGLVTATILAVIAYVWTTRTITEWRTHLREKMNRLDGQALARAVDSLLNYETVKYFGAESREEARYASAARAYADAAVKSENSLGLLNIAQALIVNLLMAGAMAWTVYGWSQGKLTVGDLVFVNTYLTQLFRPLDMLGMVYRTIRQGLIDMAEMFRLIDTHIEVADVPNAPALVVNRPSVTFDNVVFGYDRDREILHGLSFEVAAGSRVAIVGPSGAGKSTIARLLFRFYDPWEGRILIDGQDIAHVTQTSLRAALGIVPQDSVLFNDTIGYNIAYGRDGASRAEVDAAAKGAAIADFIARLPQGYDTEVGERGLKLSGGEKQRVAIARTLVKNPPILLFDEATSALDTRTEQDILSTMRAVASHRTTISIAHRLSTIADSDTILVLDQGRLAEQGSHLDLLRRDGLYAEMWARQAAESAEVSEAAE.

At 1 to 38 (MPPETATNPKDARHDGWQTLKRFLPYLWPADNAVLRRR) the chain is on the cytoplasmic side. The chain crosses the membrane as a helical span at residues 39-60 (VVGAILMVLLGKATTLALPFAY). Residues 39–327 (VVGAILMVLL…LGMVYRTIRQ (289 aa)) form the ABC transmembrane type-1 domain. At 61-82 (KKAVDAMTLGGGAQPALTVALA) the chain is on the periplasmic side. The chain crosses the membrane as a helical span at residues 83-105 (FVLAYALGRFSGVLFDNLRNIVF). The Cytoplasmic segment spans residues 106–154 (ERVGQDATRHLAENVFARLHKLSLRFHLARRTGEVTKVIERGTKSIDTM). A helical transmembrane segment spans residues 155 to 178 (LYFLLFNIAPTVIELTAVIVIFWL). Residue asparagine 179 is a topological domain, periplasmic. The helical transmembrane segment at 180-202 (FGLGLVTATILAVIAYVWTTRTI) threads the bilayer. At 203 to 266 (TEWRTHLREK…AAVKSENSLG (64 aa)) the chain is on the cytoplasmic side. Glutathione is bound by residues 206-210 (RTHLR) and 269-272 (NIAQ). The chain crosses the membrane as a helical span at residues 267–285 (LLNIAQALIVNLLMAGAMA). The Periplasmic segment spans residues 286–300 (WTVYGWSQGKLTVGD). Residues 301–322 (LVFVNTYLTQLFRPLDMLGMVY) form a helical membrane-spanning segment. Glutathione is bound at residue 316-319 (DMLG). The Cytoplasmic portion of the chain corresponds to 323–608 (RTIRQGLIDM…ESAEVSEAAE (286 aa)). The ABC transporter domain occupies 361-595 (VTFDNVVFGY…DGLYAEMWAR (235 aa)). Residues tyrosine 370 and 394–405 (GPSGAGKSTIAR) contribute to the ATP site.

Belongs to the ABC transporter superfamily. ABCB family. Heavy Metal importer (TC 3.A.1.210) subfamily. In terms of assembly, homodimer.

It localises to the cell inner membrane. In terms of biological role, mediates the ATP-dependent export of glutathione-conjugated substrates, such as heavy metal-glutathione conjugates. ATP hydrolysis is stimulated by glutathione binding. Protects cells against toxic heavy metal ions, such as silver and mercury ions. May also mediate the transport of glutathione-conjugated aromatic hydrocarbons, such as dinitrobenzene. The chain is ATM1-type heavy metal exporter (atm1) from Novosphingobium aromaticivorans (strain ATCC 700278 / DSM 12444 / CCUG 56034 / CIP 105152 / NBRC 16084 / F199).